Here is a 208-residue protein sequence, read N- to C-terminus: MTSSSSSPITFTLLLLLSLLVALNPNPSLASTGSNINTNDIVTQYSTYVRNACNVTRYNRLCVRTLWPFAIVARNNTSKWARASVAVTITDTKRVLRLLLKTQRSAVGESERIALSDCRELFVDSLDNLYKSLAVLRTLNADEFQRQISDLATWLSAALTDDDTCLDGFEETSSRTRTVRMVRRKATKCMRLCSNALALLKKLAFDGL.

An N-terminal signal peptide occupies residues 1–30 (MTSSSSSPITFTLLLLLSLLVALNPNPSLA). C53 and C62 are oxidised to a cystine. N-linked (GlcNAc...) asparagine glycosylation is found at N54 and N75. A disulfide bridge connects residues C118 and C165.

This sequence belongs to the PMEI family.

It is found in the secreted. The protein resides in the extracellular space. It localises to the apoplast. Its function is as follows. Pectin methylesterase (PME) inhibitor that targets PME from seeds and modulates PME activity and pectin methylesterification during seed germination. Promotes mucilage release by limiting methylesterification of homogalacturonan in seed coat epidermal cells. This chain is Pectinesterase inhibitor 6, found in Arabidopsis thaliana (Mouse-ear cress).